A 1207-amino-acid chain; its full sequence is DNA-directed RNA polymerase subunit beta (1207 aa).

It belongs to the RNA polymerase beta chain family. As to quaternary structure, the RNAP catalytic core consists of 2 alpha, 1 beta, 1 beta' and 1 omega subunit. When a sigma factor is associated with the core the holoenzyme is formed, which can initiate transcription.

It carries out the reaction RNA(n) + a ribonucleoside 5'-triphosphate = RNA(n+1) + diphosphate. In terms of biological role, DNA-dependent RNA polymerase catalyzes the transcription of DNA into RNA using the four ribonucleoside triphosphates as substrates. This is DNA-directed RNA polymerase subunit beta from Enterococcus faecalis (strain ATCC 700802 / V583).